Reading from the N-terminus, the 242-residue chain is uncharacterized protein (242 aa).

It to E.coli MazG and to plasmid pIP1100 erythromycin esterase.

This is an uncharacterized protein from Streptomyces cacaoi.